The chain runs to 70 residues: Peptide BmKn1 (70 aa).

Positions 1–23 (MKSQTFFLLFLVVLLLAISQSEA) are cleaved as a signal peptide. Phe-36 bears the Phenylalanine amide mark. The propeptide occupies 40–70 (SMRDMDTMKYLYDPSLSAADLKTLQKLMENY).

It belongs to the non-disulfide-bridged peptide (NDBP) superfamily. Short antimicrobial peptide (group 4) family. As to expression, expressed by the venom gland.

It is found in the secreted. It localises to the target cell membrane. In terms of biological role, antibacterial peptide. This is Peptide BmKn1 from Olivierus martensii (Manchurian scorpion).